A 63-amino-acid polypeptide reads, in one-letter code: Chromatin protein Cren7 (63 aa).

This sequence belongs to the Cren7 family. As to quaternary structure, monomer. Methylated at multiple sites, to varying extents.

It is found in the chromosome. The protein localises to the cytoplasm. Functionally, a chromatin protein, binds double-stranded DNA without sequence specificity. Constrains negative DNA supercoils. In Pyrobaculum calidifontis (strain DSM 21063 / JCM 11548 / VA1), this protein is Chromatin protein Cren7.